Consider the following 1086-residue polypeptide: 1,2-beta-oligoglucan phosphorylase (1086 aa).

The active-site Proton donor is Asp-741.

The protein belongs to the glycosyl hydrolase 94 family. In terms of assembly, monomer.

It catalyses the reaction [(1-&gt;2)-beta-D-glucosyl](n) + phosphate = [(1-&gt;2)-beta-D-glucosyl](n-1) + alpha-D-glucose 1-phosphate. Functionally, catalyzes the reversible phosphorolysis of beta-(1-&gt;2)-D-glucans. The minimum length of the substrate for the phosphorolytic reaction is 3 D-glucose units. The chain is 1,2-beta-oligoglucan phosphorylase from Listeria innocua serovar 6a (strain ATCC BAA-680 / CLIP 11262).